Reading from the N-terminus, the 96-residue chain is Large ribosomal subunit protein uL23 (96 aa).

The protein belongs to the universal ribosomal protein uL23 family. As to quaternary structure, part of the 50S ribosomal subunit. Contacts protein L29, and trigger factor when it is bound to the ribosome.

In terms of biological role, one of the early assembly proteins it binds 23S rRNA. One of the proteins that surrounds the polypeptide exit tunnel on the outside of the ribosome. Forms the main docking site for trigger factor binding to the ribosome. This chain is Large ribosomal subunit protein uL23, found in Alkaliphilus oremlandii (strain OhILAs) (Clostridium oremlandii (strain OhILAs)).